Reading from the N-terminus, the 693-residue chain is Elongation factor G (693 aa).

The 276-residue stretch at 8-283 (PQQRNIGIMA…AVVEYLPSPV (276 aa)) folds into the tr-type G domain. Residues 17–24 (AHIDAGKT), 81–85 (DTPGH), and 135–138 (NKMD) each bind GTP.

This sequence belongs to the TRAFAC class translation factor GTPase superfamily. Classic translation factor GTPase family. EF-G/EF-2 subfamily.

The protein resides in the cytoplasm. Functionally, catalyzes the GTP-dependent ribosomal translocation step during translation elongation. During this step, the ribosome changes from the pre-translocational (PRE) to the post-translocational (POST) state as the newly formed A-site-bound peptidyl-tRNA and P-site-bound deacylated tRNA move to the P and E sites, respectively. Catalyzes the coordinated movement of the two tRNA molecules, the mRNA and conformational changes in the ribosome. The chain is Elongation factor G from Oleidesulfovibrio alaskensis (strain ATCC BAA-1058 / DSM 17464 / G20) (Desulfovibrio alaskensis).